A 390-amino-acid polypeptide reads, in one-letter code: Chaperone protein DnaJ (390 aa).

The J domain occupies 6–70; sequence DYYEILGVPR…QKRAQYDQFG (65 aa). A CR-type zinc finger spans residues 146 to 228; sequence GSEKEIYVTR…CHGTGKVRRK (83 aa). C159, C162, C176, C179, C202, C205, C216, and C219 together coordinate Zn(2+). CXXCXGXG motif repeat units lie at residues 159–166, 176–183, 202–209, and 216–223; these read CPTCKGKG, CDMCNGTG, CPKCHGTG, and CHECHGTG.

This sequence belongs to the DnaJ family. In terms of assembly, homodimer. Requires Zn(2+) as cofactor.

It localises to the cytoplasm. Functionally, participates actively in the response to hyperosmotic and heat shock by preventing the aggregation of stress-denatured proteins and by disaggregating proteins, also in an autonomous, DnaK-independent fashion. Unfolded proteins bind initially to DnaJ; upon interaction with the DnaJ-bound protein, DnaK hydrolyzes its bound ATP, resulting in the formation of a stable complex. GrpE releases ADP from DnaK; ATP binding to DnaK triggers the release of the substrate protein, thus completing the reaction cycle. Several rounds of ATP-dependent interactions between DnaJ, DnaK and GrpE are required for fully efficient folding. Also involved, together with DnaK and GrpE, in the DNA replication of plasmids through activation of initiation proteins. The protein is Chaperone protein DnaJ of Dictyoglomus thermophilum (strain ATCC 35947 / DSM 3960 / H-6-12).